Here is a 182-residue protein sequence, read N- to C-terminus: MNTNDPVGWHGTTILCVRRDEQVAMAGDGQVSLGNTVVKGNARKVRRIGNGNVVAGFAGATADAFTLLERLEAKLERFPNQLERACVELAKDWRTDRYLRRLEAMMAVADRTHAYTLTGNGDVLEPEDGIIAIGSGGNYALAAARALISVDGMTAEDIARRAMKIAGDICVYTNHHVTVEIL.

Threonine 12 is a catalytic residue. Residues glycine 167, cysteine 170, and threonine 173 each contribute to the Na(+) site.

Belongs to the peptidase T1B family. HslV subfamily. As to quaternary structure, a double ring-shaped homohexamer of HslV is capped on each side by a ring-shaped HslU homohexamer. The assembly of the HslU/HslV complex is dependent on binding of ATP.

It localises to the cytoplasm. It carries out the reaction ATP-dependent cleavage of peptide bonds with broad specificity.. Its activity is regulated as follows. Allosterically activated by HslU binding. Its function is as follows. Protease subunit of a proteasome-like degradation complex believed to be a general protein degrading machinery. This Acidiphilium cryptum (strain JF-5) protein is ATP-dependent protease subunit HslV.